We begin with the raw amino-acid sequence, 156 residues long: Ribosomally synthesized cyclic peptide victorin precursosr vicA1 (156 aa).

The first 21 residues, 1–21 (MVRITALMSGSILLFALQALA), serve as a signal peptide directing secretion. Propeptides lie at residues 22-36 (MPVE…AEKR), 43-55 (KRGE…EEKR), 62-74 (KRGE…EEKR), 81-93 (KRGE…EEKR), 100-112 (KRGE…EEKR), 119-131 (KRGE…EEKR), and 138-150 (KRGE…EEKR).

In terms of processing, vicA1 is processed by several endopeptidases including kexin proteases as well as the cluster-specific peptidases vicP1 and vicP2 to produce 7 identical copies of the hexapeptide Gly-Leu-Lys-Leu-Ala-Phe, that are further modified to yield victorins. After being excised from the precursor peptide, the core peptides are cyclized and modified post-translationally by enzymes encoded within the gene cluster. The ustYa family protein vicYb is required for the formation of the macrocycle in victorin and the copper amine oxidases (CAOs) vicK1 and vicK2 are responsible for converting victorin to the active form by oxidizing the N-terminal glycyl residue in the peptides to glyoxylate. Relaxed substrate specificity of enzymes in the victorin biosynthetic pathway results in a metabolic grid that produces a set of analogs including victorinines B, C, E or HV-toxin M.

It functions in the pathway mycotoxin biosynthesis. In terms of biological role, ribosomally synthesized cyclic peptide victorin precursor, part of the gene cluster that mediates the biosynthesis of the secondary metabolite victorin, the molecular basis for Victoria blight of oats. The vicA1 translated product contains a 7-fold repeated peptide embedding the hexapeptide Gly-Leu-Lys-Leu-Ala-Phe, that is converted into the cyclic victorin. The chain is Ribosomally synthesized cyclic peptide victorin precursosr vicA1 from Bipolaris victoriae (strain FI3) (Victoria blight of oats agent).